A 748-amino-acid chain; its full sequence is MASSRCPAPRGCRCLPGASLAWLGTVLLLLADWVLLRTALPRIFSLLVPTALPLLRVWAVGLSRWAVLWLGACGVLRATVGSKSENAGAQGWLAALKPLAAALGLALPGLALFRELISWGAPGSADSTRLLHWGSHPTAFVVSYAAALPAAALWHKLGSLWVPGGQGGSGNPVRRLLGCLGSETRRLSLFLVLVVLSSLGEMAIPFFTGRLTDWILQDGSADTFTRNLTLMSILTIASAVLEFVGDGIYNNTMGHVHSHLQGEVFGAVLRQETEFFQQNQTGNIMSRVTEDTSTLSDSLSENLSLFLWYLVRGLCLLGIMLWGSVSLTMVTLITLPLLFLLPKKVGKWYQLLEVQVRESLAKSSQVAIEALSAMPTVRSFANEEGEAQKFREKLQEIKTLNQKEAVAYAVNSWTTSISGMLLKVGILYIGGQLVTSGAVSSGNLVTFVLYQMQFTQAVEVLLSIYPRVQKAVGSSEKIFEYLDRTPRCPPSGLLTPLHLEGLVQFQDVSFAYPNRPDVLVLQGLTFTLRPGEVTALVGPNGSGKSTVAALLQNLYQPTGGQLLLDGKPLPQYEHRYLHRQVAAVGQEPQVFGRSLQENIAYGLTQKPTMEEITAAAVKSGAHSFISGLPQGYDTEVDEAGSQLSGGQRQAVALARALIRKPCVLILDDATSALDANSQLQVEQLLYESPERYSRSVLLITQHLSLVEQADHILFLEGGAIREGGTHQQLMEKKGCYWAMVQAPADAPE.

Over 1 to 15 (MASSRCPAPRGCRCL) the chain is Cytoplasmic. A helical transmembrane segment spans residues 16–36 (PGASLAWLGTVLLLLADWVLL). The Lumenal segment spans residues 37 to 53 (RTALPRIFSLLVPTALP). A helical membrane pass occupies residues 54 to 76 (LLRVWAVGLSRWAVLWLGACGVL). Over 77–92 (RATVGSKSENAGAQGW) the chain is Cytoplasmic. Residues 93 to 113 (LAALKPLAAALGLALPGLALF) form a helical membrane-spanning segment. The Lumenal portion of the chain corresponds to 114–133 (RELISWGAPGSADSTRLLHW). Residues 134 to 154 (GSHPTAFVVSYAAALPAAALW) form a helical membrane-spanning segment. The Cytoplasmic portion of the chain corresponds to 155–186 (HKLGSLWVPGGQGGSGNPVRRLLGCLGSETRR). A helical transmembrane segment spans residues 187–207 (LSLFLVLVVLSSLGEMAIPFF). Positions 187-470 (LSLFLVLVVL…LLSIYPRVQK (284 aa)) constitute an ABC transmembrane type-1 domain. Residues 208 to 227 (TGRLTDWILQDGSADTFTRN) are Lumenal-facing. The helical transmembrane segment at 228-248 (LTLMSILTIASAVLEFVGDGI) threads the bilayer. Topologically, residues 249 to 298 (YNNTMGHVHSHLQGEVFGAVLRQETEFFQQNQTGNIMSRVTEDTSTLSDS) are cytoplasmic. The chain crosses the membrane as a helical span at residues 299 to 319 (LSENLSLFLWYLVRGLCLLGI). Residues 320–328 (MLWGSVSLT) lie on the Lumenal side of the membrane. A helical transmembrane segment spans residues 329–349 (MVTLITLPLLFLLPKKVGKWY). At 350-418 (QLLEVQVRES…AVNSWTTSIS (69 aa)) the chain is on the cytoplasmic side. The tract at residues 375 to 420 (PTVRSFANEEGEAQKFREKLQEIKTLNQKEAVAYAVNSWTTSISGM) is part of the peptide-binding site. The helical transmembrane segment at 419–439 (GMLLKVGILYIGGQLVTSGAV) threads the bilayer. The Lumenal segment spans residues 440–443 (SSGN). The helical transmembrane segment at 444 to 464 (LVTFVLYQMQFTQAVEVLLSI) threads the bilayer. Residues 453–487 (QFTQAVEVLLSIYPRVQKAVGSSEKIFEYLDRTPR) are part of the peptide-binding site. Residues 465 to 748 (YPRVQKAVGS…MVQAPADAPE (284 aa)) lie on the Cytoplasmic side of the membrane. Positions 503 to 742 (VQFQDVSFAY…KGCYWAMVQA (240 aa)) constitute an ABC transporter domain. ATP-binding positions include 538 to 546 (GPNGSGKST), 641 to 647 (SQLSGGQ), and Gln-701. A Mg(2+)-binding site is contributed by Ser-545.

It belongs to the ABC transporter superfamily. ABCB family. MHC peptide exporter (TC 3.A.1.209) subfamily. In terms of assembly, heterodimer of TAP1 and TAP2 (TAP1-TAP2). A component of the peptide loading complex (PLC), interacts via TAPBP with MHCI heterodimer; this interaction mediates peptide-MHCI assembly. Recruits TAPBP in a 1:1 stoichiometry. Interacts with classical MHCI such as HLA-A*02-B2M; this interaction is obligatory for the loading of peptide epitopes. Interacts with non-classical MHCI molecules including HLA-E-B2M and HLA-F-B2M as well as PLC component CALR before the peptide loading. Interacts with PSMB5 and PSMB8. As to quaternary structure, (Microbial infection) Interacts with Epstein-Barr virus BNLF2a. (Microbial infection) Interacts with herpes simplex virus US12/ICP47. In terms of assembly, (Microbial infection) Interacts with adenovirus E3-19K glycoprotein, which binds TAP1-TAP2 and acts as a TAPBP inhibitor, preventing TAP1-TAP2 association with MHCI. The cofactor is Mg(2+). In terms of tissue distribution, highly expressed in professional APCs monocytes and dendritic cells as well as in lymphocyte subsets T cells, B cells and NK cells.

The protein localises to the endoplasmic reticulum membrane. It carries out the reaction a peptide antigen(in) + ATP + H2O = a peptide antigen(out) + ADP + phosphate + H(+). Its activity is regulated as follows. Inhibited at high ER lumenal peptide concentrations. With respect to regulation, (Microbial infection) Inhibited by herpes simplex virus US12/ICP47 protein, which blocks the peptide-binding site of TAP1-TAP2. (Microbial infection) Inhibited by human cytomegalovirus US6 glycoprotein, which binds to the lumenal side of TAP1-TAP2 complex and inhibits peptide translocation by specifically blocking ATP-binding and preventing TAP1-TAP2 conformational rearrangement induced by peptide binding. In terms of biological role, ABC transporter associated with antigen processing. In complex with TAP2 mediates unidirectional translocation of peptide antigens from cytosol to endoplasmic reticulum (ER) for loading onto MHC class I (MHCI) molecules. Uses the chemical energy of ATP to export peptides against the concentration gradient. During the transport cycle alternates between 'inward-facing' state with peptide binding site facing the cytosol to 'outward-facing' state with peptide binding site facing the ER lumen. Peptide antigen binding to ATP-loaded TAP1-TAP2 induces a switch to hydrolysis-competent 'outward-facing' conformation ready for peptide loading onto nascent MHCI molecules. Subsequently ATP hydrolysis resets the transporter to the 'inward facing' state for a new cycle. Typically transports intracellular peptide antigens of 8 to 13 amino acids that arise from cytosolic proteolysis via IFNG-induced immunoproteasome. Binds peptides with free N- and C-termini, the first three and the C-terminal residues being critical. Preferentially selects peptides having a highly hydrophobic residue at position 3 and hydrophobic or charged residues at the C-terminal anchor. Proline at position 2 has the most destabilizing effect. As a component of the peptide loading complex (PLC), acts as a molecular scaffold essential for peptide-MHCI assembly and antigen presentation. This Homo sapiens (Human) protein is Antigen peptide transporter 1.